The sequence spans 297 residues: Chelated iron transport system membrane protein YfeD (297 aa).

Transmembrane regions (helical) follow at residues Ala20–Leu40, Ile58–Phe78, Thr96–Ile116, Ile133–Leu153, Ile172–Val192, Ala197–Ile217, Met224–Phe244, and Gly248–Tyr268.

Belongs to the ABC-3 integral membrane protein family.

The protein localises to the cell inner membrane. In terms of biological role, part of an ATP-driven transport system YfeABCD for chelated iron. In Yersinia pestis, this protein is Chelated iron transport system membrane protein YfeD (yfeD).